Here is a 444-residue protein sequence, read N- to C-terminus: UDP-N-acetylmuramate--L-alanine ligase (444 aa).

Position 110–116 (110–116 (GAHGKTS)) interacts with ATP.

The protein belongs to the MurCDEF family.

The protein localises to the cytoplasm. The catalysed reaction is UDP-N-acetyl-alpha-D-muramate + L-alanine + ATP = UDP-N-acetyl-alpha-D-muramoyl-L-alanine + ADP + phosphate + H(+). Its pathway is cell wall biogenesis; peptidoglycan biosynthesis. Cell wall formation. This is UDP-N-acetylmuramate--L-alanine ligase from Streptococcus sanguinis (strain SK36).